Here is a 375-residue protein sequence, read N- to C-terminus: Deoxyribonuclease-2 (375 aa).

The first 21 residues, 1–21 (MGLSPAAVLIFLLLGVSQTYA), serve as a signal peptide directing secretion. The N-linked (GlcNAc...) asparagine glycan is linked to asparagine 131.

Belongs to the DNase II family.

The enzyme catalyses Endonucleolytic cleavage to nucleoside 3'-phosphates and 3'-phosphooligonucleotide end-products.. In terms of biological role, hydrolyzes DNA under acidic conditions with a preference for double-stranded DNA. Implicated in apoptosis. This chain is Deoxyribonuclease-2 (nuc-1), found in Caenorhabditis elegans.